Consider the following 563-residue polypeptide: MDIEETIYKYALTNAIEHGNKCQVGSVIGMVMSKNPEMRKDPKTVSQLAGKLVAKVNNLTPEEQQKEVESLGGLEQHTKKEEKPKGLPELKNTEDKKVTLRFAPNPSGPLHIGHARAAILNKLYQEKYNGKLILRIEDTDPKRVEPDAYDAIPQDIKWLGIEPDEIYTQSDRLEIYYEYAQKAIEIGAAYMCKCDGGEFKKLKDNCQPCPCRSHTIEENMELWNNFENMEEGEAVLRIKTDINHKNPAIRDWVAMRIVNQEHPRLGNKYKIYPMMNFSVTVDDHLMGMTHVLRGKDHLANSEKQTYLYKHFGWDVPEFIHYGRLKMDDVELSTSKAREGIENKTYTGWDDPRLGTIRAIARRGIKKEVLYDLIEEIGTKQADATISWKKIYGLNRNIIEENTNRYFFIPNAVKVDVENLPSSKTNMTVERELHYNKPEKGFRNLTFNGSVYIPEDDYKHAQDKNIPLRLMDLINIKIEEDKVIYDSETLEDAQAQHARIIQWAPVETSISATVVMPDNTHVTGYIECDASNLEVDDMVQLERFGFARVDKINDNEITFYYTHN.

Residues 61-94 (PEEQQKEVESLGGLEQHTKKEEKPKGLPELKNTE) form a disordered region. Over residues 76 to 94 (QHTKKEEKPKGLPELKNTE) the composition is skewed to basic and acidic residues. The 'HIGH' region motif lies at 104–114 (PNPSGPLHIGH).

The protein belongs to the class-I aminoacyl-tRNA synthetase family. Glutamate--tRNA ligase type 2 subfamily.

It is found in the cytoplasm. It catalyses the reaction tRNA(Glu) + L-glutamate + ATP = L-glutamyl-tRNA(Glu) + AMP + diphosphate. In terms of biological role, catalyzes the attachment of glutamate to tRNA(Glu) in a two-step reaction: glutamate is first activated by ATP to form Glu-AMP and then transferred to the acceptor end of tRNA(Glu). The sequence is that of Glutamate--tRNA ligase from Methanosphaera stadtmanae (strain ATCC 43021 / DSM 3091 / JCM 11832 / MCB-3).